Reading from the N-terminus, the 256-residue chain is MLAKRIIPCLDVTNGRVVKGVNFVELRDAGDPVEIARRYDEQGADEITFLDITATSDGRDLMLHIIEDVASQVFIPLTVGGGVRTVEDVRRLLNAGADKISVNSSAIANPQLVSDATARYGSQCIVVAIDAKRSSAPGEAPRWEVFTHGGRKATGLDAVQWAREMATRGAGEILLTSMDRDGTKSGFDLELTRAVSDAVPVPVIASGGVGGLQDLADGITRGRADAVLAASIFHYGQHTVGEAKAFMAREGIPVRI.

Residues Asp11 and Asp130 contribute to the active site.

This sequence belongs to the HisA/HisF family. As to quaternary structure, heterodimer of HisH and HisF.

The protein localises to the cytoplasm. It catalyses the reaction 5-[(5-phospho-1-deoxy-D-ribulos-1-ylimino)methylamino]-1-(5-phospho-beta-D-ribosyl)imidazole-4-carboxamide + L-glutamine = D-erythro-1-(imidazol-4-yl)glycerol 3-phosphate + 5-amino-1-(5-phospho-beta-D-ribosyl)imidazole-4-carboxamide + L-glutamate + H(+). It functions in the pathway amino-acid biosynthesis; L-histidine biosynthesis; L-histidine from 5-phospho-alpha-D-ribose 1-diphosphate: step 5/9. Functionally, IGPS catalyzes the conversion of PRFAR and glutamine to IGP, AICAR and glutamate. The HisF subunit catalyzes the cyclization activity that produces IGP and AICAR from PRFAR using the ammonia provided by the HisH subunit. This chain is Imidazole glycerol phosphate synthase subunit HisF, found in Cupriavidus taiwanensis (strain DSM 17343 / BCRC 17206 / CCUG 44338 / CIP 107171 / LMG 19424 / R1) (Ralstonia taiwanensis (strain LMG 19424)).